A 397-amino-acid polypeptide reads, in one-letter code: Methylthioribose kinase (397 aa).

Residues N43, K60, and 114–116 (EDL) each bind ATP. D232 provides a ligand contact to substrate. 249 to 251 (DPE) lines the ATP pocket. Residue R340 participates in substrate binding.

This sequence belongs to the methylthioribose kinase family. Homodimer.

The catalysed reaction is 5-(methylsulfanyl)-D-ribose + ATP = 5-(methylsulfanyl)-alpha-D-ribose 1-phosphate + ADP + H(+). It participates in amino-acid biosynthesis; L-methionine biosynthesis via salvage pathway; S-methyl-5-thio-alpha-D-ribose 1-phosphate from S-methyl-5'-thioadenosine (hydrolase route): step 2/2. Functionally, catalyzes the phosphorylation of methylthioribose into methylthioribose-1-phosphate. This Bacillus pumilus (strain SAFR-032) protein is Methylthioribose kinase.